The sequence spans 241 residues: Small ribosomal subunit protein uS5 (241 aa).

Positions 1 to 53 (MSDNEKETQVAEETQNTQAAAESNNEDRKSRRGQRGEGRRGERRNRREESHEN) are disordered. Positions 11-22 (AEETQNTQAAAE) are enriched in low complexity. The segment covering 25–53 (NEDRKSRRGQRGEGRRGERRNRREESHEN) has biased composition (basic and acidic residues). The region spanning 55–118 (MLDRVVTINR…LDAKKHMFTV (64 aa)) is the S5 DRBM domain.

Belongs to the universal ribosomal protein uS5 family. In terms of assembly, part of the 30S ribosomal subunit. Contacts proteins S4 and S8.

In terms of biological role, with S4 and S12 plays an important role in translational accuracy. Its function is as follows. Located at the back of the 30S subunit body where it stabilizes the conformation of the head with respect to the body. This chain is Small ribosomal subunit protein uS5, found in Bifidobacterium adolescentis (strain ATCC 15703 / DSM 20083 / NCTC 11814 / E194a).